The following is a 132-amino-acid chain: NADH-quinone oxidoreductase subunit A 2 (132 aa).

The next 3 helical transmembrane spans lie at 10-30, 66-86, and 93-113; these read WALL…LGLG, LVAM…LWAV, and WAGF…LFYL.

This sequence belongs to the complex I subunit 3 family. In terms of assembly, NDH-1 is composed of 13 different subunits. Subunits NuoA, H, J, K, L, M, N constitute the membrane sector of the complex.

The protein resides in the cell inner membrane. The enzyme catalyses a quinone + NADH + 5 H(+)(in) = a quinol + NAD(+) + 4 H(+)(out). Its function is as follows. NDH-1 shuttles electrons from NADH, via FMN and iron-sulfur (Fe-S) centers, to quinones in the respiratory chain. The immediate electron acceptor for the enzyme in this species is believed to be ubiquinone. Couples the redox reaction to proton translocation (for every two electrons transferred, four hydrogen ions are translocated across the cytoplasmic membrane), and thus conserves the redox energy in a proton gradient. This is NADH-quinone oxidoreductase subunit A 2 from Pseudomonas aeruginosa (strain UCBPP-PA14).